The chain runs to 32 residues: Cathepsin B-like cysteine proteinase (32 aa).

The propeptide at 1 to 22 is activation peptide; the sequence is KPNYKRQFEPFSDELIHYINLE.

It belongs to the peptidase C1 family.

In terms of biological role, thiol protease. This chain is Cathepsin B-like cysteine proteinase, found in Fasciola hepatica (Liver fluke).